We begin with the raw amino-acid sequence, 120 residues long: Seripauperin-2 (120 aa).

The chain crosses the membrane as a helical span at residues isoleucine 7 to leucine 24.

This sequence belongs to the SRP1/TIP1 family. Seripauperin subfamily.

Its subcellular location is the membrane. The protein is Seripauperin-2 (PAU2) of Saccharomyces cerevisiae (strain ATCC 204508 / S288c) (Baker's yeast).